Reading from the N-terminus, the 520-residue chain is Cytochrome P450 6d3 (520 aa).

Residue cysteine 461 participates in heme binding.

The protein belongs to the cytochrome P450 family. It depends on heme as a cofactor.

It is found in the endoplasmic reticulum membrane. The protein resides in the microsome membrane. Functionally, metabolizes pyrethroid insecticides and other xenobiotics. This is Cytochrome P450 6d3 (CYP6D3) from Musca domestica (House fly).